The chain runs to 7158 residues: Twitchin (7158 aa).

2 Ig-like domains span residues 5–97 and 111–204; these read PRFT…INLN and PSFV…LALN. Cystine bridges form between Cys25–Cys81 and Cys132–Cys188. Disordered regions lie at residues 204-381, 473-639, 658-732, and 763-955; these read NFEE…PIVL, EEEL…TKLR, KKVK…DSMA, and EVKE…IDMR. The segment covering 220-238 has biased composition (low complexity); the sequence is TASPRPSSRGPGSRPSSPK. Basic and acidic residues-rich tracts occupy residues 242–259 and 279–291; these read KSRE…EGSP and ESRR…KMEV. 2 stretches are compositionally biased toward low complexity: residues 319 to 340 and 347 to 368; these read SPST…RKGS and SGTT…ASSD. Positions 377-466 constitute an Ig-like 3 domain; that stretch reads PPIVLEASRS…GEGQSSAMVK (90 aa). Over residues 504–513 the composition is skewed to basic residues; it reads RVARRSKSKS. A compositionally biased stretch (low complexity) spans 514 to 523; sequence KSPAPQAKKS. Composition is skewed to basic and acidic residues over residues 529 to 540 and 601 to 618; these read GRQEASEVEHKR and KTDS…DTLL. Residues 620–630 show a composition bias toward low complexity; it reads KTTTSTKNESS. One copy of the Kelch 1 repeat lies at 718–764; the sequence is VKSGAGGLEKSDSMASLKKLDLKKGKIDDNSDGAFKVQLKKVVKKEV. Composition is skewed to basic and acidic residues over residues 763–813, 837–850, 885–897, and 917–955; these read EVKE…DKPK, KEVE…ELKA, KAHD…EGIK, and SESR…IDMR. Residues 980 to 1072 enclose the Ig-like 4 domain; it reads PKIVEVPENV…DSADVKLLVT (93 aa). Residues 1088 to 1118 are disordered; sequence SQAGFQKDGEGGGAGGGGGEKKPMTEAERRQ. Residues 1106 to 1118 show a composition bias toward basic and acidic residues; it reads GEKKPMTEAERRQ. Ig-like domains follow at residues 1122 to 1213, 1217 to 1306, and 1312 to 1398; these read PGKK…AQLT, PPMK…SKVQ, and PRHT…AQLI. An intrachain disulfide couples Cys1150 to Cys1201. Fibronectin type-III domains are found at residues 1598-1690, 1696-1791, 1891-1988, 1994-2087, 2189-2282, 2288-2383, 2483-2576, and 2579-2675; these read PKGP…AKNP, KPKN…MKAK, PPKG…IKDP, KPGR…AKPK, PNGP…AKNP, KTGT…AKPR, PLGP…AKNP, and VPGK…AKPR. One copy of the Kelch 2 repeat lies at 2014-2058; the sequence is PPHKDGGAPIEEYIVEVRDPDTKEWKEVKRVPDTNASISGLKEGK. One can recognise an Ig-like 8 domain in the interval 2086–2181; sequence PKFIPAWLKH…GADEEKANLT (96 aa). The Kelch 3 repeat unit spans residues 2207-2253; the sequence is WKPPDDDGGEPIEYYEVEKLDTATGRWVPCAKVKDTKAHIDGLKKGQ. The span at 2266-2287 shows a compositional bias: basic and acidic residues; it reads GASDALSTDKDTKAKNPYDEPG. Residues 2266–2295 form a disordered region; that stretch reads GASDALSTDKDTKAKNPYDEPGKTGTPDVV. A Kelch 4 repeat occupies 2502–2547; that stretch reads KVPEDDGGAPIDHYEIEKMDLATGRWVPCGRSETTKTTVPNLQPGH. In terms of domain architecture, Ig-like 9 spans 2679 to 2763; sequence PRIHREDLSD…TNINGTDSVT (85 aa). 2 Fibronectin type-III domains span residues 2775–2868 and 2874–2968; these read PKGP…AKNP and RPGR…AKPR. The Kelch 5 repeat unit spans residues 2793 to 2839; sequence WKPPEDDGGEPIEFYEIEKMNTKDGIWVPCGRSGDTHFTVDSLNKGD. The disordered stretch occupies residues 2849–2901; the sequence is NSEGPSDPLETETDILAKNPFDRPDRPGRPEPTDWDSDHVDLKWDPPLSDGGA. Residues 2868–2892 show a composition bias toward basic and acidic residues; sequence PFDRPDRPGRPEPTDWDSDHVDLKW. Residues 2972 to 3062 form the Ig-like 10 domain; sequence PHIDRDALKN…GEDEATVKIN (91 aa). Fibronectin type-III domains are found at residues 3070-3165 and 3171-3265; these read PNGP…AKDP and KTNA…AKAR. The stretch at 3089-3134 is one Kelch 6 repeat; that stretch reads RAPDDDGGIPIENYVIEKYDTASGRWVPAAKVAGDKTTAVVDGLIP. One can recognise an Ig-like 11 domain in the interval 3268-3358; it reads PPVIDRNSIQ…GTDTAEVKVT (91 aa). Fibronectin type-III domains lie at 3365 to 3459 and 3465 to 3559; these read SPRG…AKDP and KPGT…AKPR. A Kelch 7 repeat occupies 3384–3430; sequence WKEPEDDGGAEISHYVIEKQDAATGRWTACGESKDTNFHVDDLTQGH. The region spanning 3563–3653 is the Ig-like 12 domain; sequence PKINRDMFVA…GKDEHEVDVN (91 aa). Fibronectin type-III domains lie at 3661–3753, 3759–3853, 3954–4047, 4053–4146, 4246–4340, and 4346–4440; these read PEGP…AKNP, APTD…AKPR, PEGP…AKNQ, PVDK…TKAR, PEGP…AKDP, and KPGR…TAKP. One copy of the Kelch 8 repeat lies at 3972 to 4018; it reads WKPPTDNGGTDVLHYIVEKMDTSRGTWQEVGTFPDCTAKVNKLVPGK. Kelch repeat units lie at residues 4265–4310 and 4365–4410; these read KPPK…LTEG and DPPR…RVQK. The Ig-like 13 domain maps to 4445 to 4531; it reads PKFDLDLDGK…GEAEANIKIT (87 aa). Fibronectin type-III domains are found at residues 4538–4631, 4637–4733, 4739–4834, 4936–5028, 5034–5129, 5231–5326, 5333–5427, and 5430–5528; these read APEN…IKDP, APST…CRPY, APDA…IEEQ, PTGP…AKNP, APGQ…ADNA, SPQH…VAKY, QPEA…LKSR, and PPGP…IQES. A Kelch 11 repeat occupies 4557–4602; sequence DAPKDDGGAEIAGYKIEYQEVGSQIWDKVPGLISGTAYTVRGLEHG. Residues 5287–5335 form a Kelch 12 repeat; it reads LNYTVGGLIKDNRYRFRVRAETQYGVSEPCELADVVVAKYQFEVPNQPE. In terms of domain architecture, Ig-like 14 spans 5533–5621; it reads PQIVVKPEDT…GSDTATANLV (89 aa). Fibronectin type-III domains are found at residues 5723–5817 and 5823–5919; these read PQGP…ARLP and SPLN…ASGS. The stretch at 5742-5787 is one Kelch 13 repeat; it reads RPPVTDGGSKITSYVVEKRDLSKDEWVTVTSNVKDMNYIVTGLFEN. Ig-like domains are found at residues 5923–6011 and 6016–6107; these read PKIV…ANLR and PRVF…VNVT. Cys5944 and Cys5995 are joined by a disulfide. The 94-residue stretch at 6114-6207 folds into the Fibronectin type-III 31 domain; sequence PPRFPIIENI…PTAPVLIPGD (94 aa). One can recognise a Protein kinase domain in the interval 6261–6516; sequence YDIHEELGTG…IHQALEHPWL (256 aa). ATP-binding positions include 6267–6275 and Lys6290; that span reads LGTGAFGVV. Asp6382 functions as the Proton acceptor in the catalytic mechanism. Positions 6517–6581 are C-terminal regulatory domain (CDR); that stretch reads TPGNAPGRDS…SIRDAFWDRS (65 aa). Ig-like domains follow at residues 6585 to 6673, 6696 to 6795, 6863 to 6952, 6958 to 7059, and 7067 to 7149; these read PRFI…VFLN, PRVE…CVLT, PSFT…ATLT, PLLN…ASLV, and PPVT…KAIA.

This sequence belongs to the protein kinase superfamily. CAMK Ser/Thr protein kinase family. As to quaternary structure, may interact (via protein kinase and CRD domains) with mak-1 (via protein kinase domain). Mg(2+) serves as cofactor. Post-translationally, phosphorylated by mak-1 on the protein kinase domain and/or CDR domain in vitro. Expressed in body wall, anal, vulval, and pharyngeal muscles (at protein level).

The protein localises to the cytoplasm. It is found in the myofibril. Its subcellular location is the sarcomere. The protein resides in the a band. The enzyme catalyses L-seryl-[protein] + ATP = O-phospho-L-seryl-[protein] + ADP + H(+). It carries out the reaction L-threonyl-[protein] + ATP = O-phospho-L-threonyl-[protein] + ADP + H(+). With respect to regulation, forces generated by the contraction/relaxation cycles of muscle activity separate the regulatory domain from the catalytic core, activating the enzyme. At rest, the kinase domain is in a closed conformation. The active site is occupied by the autoinhibitory region (CDR), which makes extensive contact with the catalytic site, blocking substrate binding. At low forces the regulatory tail will unravel reversibly and expose the active site to its substrates, potentially stabilized by binding of Ca/CALM. At high forces the kinase begins to unfold and the integrity of the active site is disrupted. Functionally, regulator of muscle contraction and relaxation. Senses mechanical strain that occurs during muscle activity by unfolding in clearly resolvable steps at differing forces. Plays a role in the organization of sarcomeres in body wall muscles. The protein is Twitchin of Caenorhabditis elegans.